Reading from the N-terminus, the 123-residue chain is NADH-quinone oxidoreductase subunit A (123 aa).

3 helical membrane-spanning segments follow: residues 11-31 (YLPIAIFFGIALLVSGLIMIL), 68-88 (LVAILFIIFDLEIAFLVPWAI), and 93-113 (IGKIGFFSMIFFLFVLTIGFI).

This sequence belongs to the complex I subunit 3 family. In terms of assembly, NDH-1 is composed of 14 different subunits. Subunits NuoA, H, J, K, L, M, N constitute the membrane sector of the complex.

It localises to the cell inner membrane. It catalyses the reaction a quinone + NADH + 5 H(+)(in) = a quinol + NAD(+) + 4 H(+)(out). Its function is as follows. NDH-1 shuttles electrons from NADH, via FMN and iron-sulfur (Fe-S) centers, to quinones in the respiratory chain. The immediate electron acceptor for the enzyme in this species is believed to be ubiquinone. Couples the redox reaction to proton translocation (for every two electrons transferred, four hydrogen ions are translocated across the cytoplasmic membrane), and thus conserves the redox energy in a proton gradient. This is NADH-quinone oxidoreductase subunit A from Rickettsia felis (strain ATCC VR-1525 / URRWXCal2) (Rickettsia azadi).